The chain runs to 388 residues: Probable proton-coupled zinc antiporter SLC30A3 (388 aa).

Residues 1-41 (MEPSLATGGSETTRLVSARDRSSAGGGLRLKSLFTEPSEPL) are disordered. At 1–75 (MEPSLATGGS…SPERVQARRQ (75 aa)) the chain is on the cytoplasmic side. Phosphoserine is present on residues Ser63 and Ser66. The helical transmembrane segment at 76–96 (LYAACAVCFIFMAGEVVGGYL) threads the bilayer. At 97–105 (AHSLAIMTD) the chain is on the lumenal side. A helical membrane pass occupies residues 106–126 (AAHLLADIGSMLASLFSLWLS). 2 residues coordinate Zn(2+): His108 and Asp112. Over 127–145 (TRPATRTMTFGWHRSETLG) the chain is Cytoplasmic. The helical transmembrane segment at 146–166 (ALASVVSLWIVTGILLYLAFL) threads the bilayer. The Lumenal portion of the chain corresponds to 167 to 177 (RLLHSDYHIEA). A helical membrane pass occupies residues 178 to 198 (GAMLLTASIAVCANLLMAFVL). Topologically, residues 199–235 (HQTGAPHSHGSTGAEYAPLEEGHGYPMSLGNTSVRAA) are cytoplasmic. The helical transmembrane segment at 236 to 256 (FVHVLGDLLQSFGVLAASILI) threads the bilayer. The Zn(2+) site is built by His238 and Asp242. At 257–263 (YFKPQYK) the chain is on the lumenal side. Residues 264–284 (VADPISTFLFSICALGSTAPT) traverse the membrane as a helical segment. The Cytoplasmic portion of the chain corresponds to 285-388 (LRDVLLVLME…CLRCQEPSQA (104 aa)).

This sequence belongs to the cation diffusion facilitator (CDF) transporter (TC 2.A.4) family. SLC30A subfamily. As to quaternary structure, homodimer. Homodimerization is negligible compared to the human protein. It could explain the lower efficiency of zinc transport. Interacts with TMEM163. As to expression, expression is restricted to brain (at protein level). In the brain, most abundant in hippocampus and cerebral cortex. The mRNA is also detected in testis, expression being restricted to germ cells and highest in pachytene spermatocytes and round spermatids.

The protein localises to the cytoplasmic vesicle. It localises to the secretory vesicle. The protein resides in the synaptic vesicle membrane. It is found in the synapse. Its subcellular location is the synaptosome. The protein localises to the late endosome membrane. It localises to the lysosome membrane. The catalysed reaction is Zn(2+)(in) + 2 H(+)(out) = Zn(2+)(out) + 2 H(+)(in). Probable proton-coupled zinc ion antiporter mediating the import of zinc from cytoplasm into synaptic vesicles and participating to cellular zinc ion homeostasis in the brain. The chain is Probable proton-coupled zinc antiporter SLC30A3 from Mus musculus (Mouse).